We begin with the raw amino-acid sequence, 324 residues long: Dehydrogenase/reductase SDR family member 7C-A (324 aa).

Residues 1-17 (MAVPSVMVLPLLIVVFA) form the signal peptide. 41-65 (VITDAVSGMGSECARLFHAGGARLV) is an NAD(+) binding site. A substrate-binding site is contributed by serine 178. Catalysis depends on tyrosine 191, which acts as the Proton acceptor.

It belongs to the short-chain dehydrogenases/reductases (SDR) family.

The protein resides in the secreted. Putative oxidoreductase. This chain is Dehydrogenase/reductase SDR family member 7C-A (dhrs7ca), found in Danio rerio (Zebrafish).